The primary structure comprises 297 residues: Putative 6-phosphogluconate dehydrogenase YqeC (297 aa).

NAD(+)-binding positions include 7–12 (GLGKMG) and asparagine 94. Substrate is bound by residues asparagine 94 and 120–122 (SGG). Lysine 170 serves as the catalytic Proton acceptor. 173-174 (HN) lines the substrate pocket. Catalysis depends on glutamate 177, which acts as the Proton donor. The substrate site is built by tyrosine 178 and arginine 268.

It belongs to the 6-phosphogluconate dehydrogenase family.

Functionally, may act as NAD-dependent 6-P-gluconate dehydrogenase. The protein is Putative 6-phosphogluconate dehydrogenase YqeC (yqeC) of Bacillus subtilis (strain 168).